The primary structure comprises 330 residues: Catharanthine synthase (330 aa).

Residues 81–83 (HGA) carry the Involved in the stabilization of the negatively charged intermediate by the formation of the oxyanion hole motif. Catharanthine is bound at residue Gly84. Ser173 (proton acceptor) is an active-site residue. Residue Asp274 is part of the active site. Tyr305 contacts catharanthine. Residue Tyr305 is the Proton donor/acceptor of the active site.

This sequence belongs to the 'GDXG' lipolytic enzyme family. In terms of assembly, interacts with dehydroprecondylocarpine acetate synthase (DPAS). Expressed in leaf epidermis.

It localises to the cytoplasm. The protein resides in the cytosol. The protein localises to the nucleus. The catalysed reaction is dehydrosecodine = catharanthine. Its pathway is alkaloid biosynthesis. Its function is as follows. Component of iboga and aspidosperma monoterpenoid indole alkaloids (MIAs, e.g. tabersonine and catharanthine) biosynthesis pathway from 19E-geissoschizine, psychoactive compounds likely to be used in the treatment of opioid dependence. Catalyzes the conversion of dehydrosecodine to catharanthine. This Catharanthus roseus (Madagascar periwinkle) protein is Catharanthine synthase.